Consider the following 491-residue polypeptide: Putative diacyglycerol O-acyltransferase MT2557 (491 aa).

The active-site Proton acceptor is the H145.

This sequence belongs to the long-chain O-acyltransferase family.

The catalysed reaction is an acyl-CoA + a 1,2-diacyl-sn-glycerol = a triacyl-sn-glycerol + CoA. Its pathway is glycerolipid metabolism; triacylglycerol biosynthesis. This chain is Putative diacyglycerol O-acyltransferase MT2557, found in Mycobacterium tuberculosis (strain CDC 1551 / Oshkosh).